The sequence spans 472 residues: Membrane-bound acylglycerophosphatidylinositol O-acyltransferase MBOAT7 (472 aa).

At M1–E5 the chain is on the cytoplasmic side. The chain crosses the membrane as a helical span at residues W6–F22. Over K23–G33 the chain is Lumenal. A helical transmembrane segment spans residues A34–I57. The Cytoplasmic segment spans residues L58–A73. Residues L74–G93 traverse the membrane as a helical segment. The Lumenal portion of the chain corresponds to L94–R194. The chain crosses the membrane as a helical span at residues A195–F212. Residues P213–L231 lie on the Cytoplasmic side of the membrane. A helical transmembrane segment spans residues F232–F261. The Lumenal segment spans residues G262–W426. An N-linked (GlcNAc...) asparagine glycan is attached at N321. Residues A427–L447 traverse the membrane as a helical segment. The Cytoplasmic segment spans residues G448 to E472. The interval G450–E472 is disordered.

Belongs to the membrane-bound acyltransferase family. As to quaternary structure, interacts with SPTSSA; the interaction facilitates MBOAT7 location to mitochondria-associated membranes (MAMs).

Its subcellular location is the endoplasmic reticulum membrane. The catalysed reaction is a 1-acyl-sn-glycero-3-phospho-(1D-myo-inositol) + an acyl-CoA = a 1,2-diacyl-sn-glycero-3-phospho-(1D-myo-inositol) + CoA. It carries out the reaction a 1-acyl-sn-glycero-3-phospho-(1D-myo-inositol) + (5Z,8Z,11Z,14Z)-eicosatetraenoyl-CoA = a 1-acyl-2-(5Z,8Z,11Z,14Z-eicosatetraenoyl)-sn-glycero-3-phospho-(1D-myo-inositol) + CoA. It catalyses the reaction (5Z,8Z,11Z,14Z)-eicosatetraenoyl-CoA + 1-hexadecanoyl-sn-glycero-3-phosphocholine = 1-hexadecanoyl-2-(5Z,8Z,11Z,14Z-eicosatetraenoyl)-sn-glycero-3-phosphocholine + CoA. The enzyme catalyses 1-octadecanoyl-sn-glycero-3-phospho-(1D-myo-inositol) + (5Z,8Z,11Z,14Z)-eicosatetraenoyl-CoA = 1-octadecanoyl-2-(5Z,8Z,11Z,14Z-eicosatetraenoyl)-sn-glycero-3-phospho-(1D-myo-inositol) + CoA. The protein operates within lipid metabolism; phospholipid metabolism. In terms of biological role, acyltransferase which catalyzes the transfer of an acyl group from an acyl-CoA to a lysophosphatidylinositol (1-acylglycerophosphatidylinositol or LPI) leading to the production of a phosphatidylinositol (1,2-diacyl-sn-glycero-3-phosphoinositol or PI) and participates in the reacylation step of the phospholipid remodeling pathway also known as the Lands cycle. Prefers arachidonoyl-CoA as the acyl donor, thus contributing to the regulation of free levels arachidonic acid in cell. In liver, participates in the regulation of triglyceride metabolism through the phosphatidylinositol acyl-chain remodeling regulation. The sequence is that of Membrane-bound acylglycerophosphatidylinositol O-acyltransferase MBOAT7 (MBOAT7) from Bos taurus (Bovine).